Here is a 377-residue protein sequence, read N- to C-terminus: Chaperone protein DnaJ (377 aa).

Positions 5 to 69 (EYYDRLGLSK…QKRAAYDQYG (65 aa)) constitute a J domain. The CR-type zinc-finger motif lies at 133–215 (GAEKEIHYNR…CHGTGREKQS (83 aa)). Zn(2+) is bound by residues Cys-146, Cys-149, Cys-163, Cys-166, Cys-189, Cys-192, Cys-203, and Cys-206. CXXCXGXG motif repeat units follow at residues 146 to 153 (CKTCSGSG), 163 to 170 (CGRCHGHG), 189 to 196 (CDVCHGTG), and 203 to 210 (CQTCHGTG).

The protein belongs to the DnaJ family. Homodimer. The cofactor is Zn(2+).

It localises to the cytoplasm. In terms of biological role, participates actively in the response to hyperosmotic and heat shock by preventing the aggregation of stress-denatured proteins and by disaggregating proteins, also in an autonomous, DnaK-independent fashion. Unfolded proteins bind initially to DnaJ; upon interaction with the DnaJ-bound protein, DnaK hydrolyzes its bound ATP, resulting in the formation of a stable complex. GrpE releases ADP from DnaK; ATP binding to DnaK triggers the release of the substrate protein, thus completing the reaction cycle. Several rounds of ATP-dependent interactions between DnaJ, DnaK and GrpE are required for fully efficient folding. Also involved, together with DnaK and GrpE, in the DNA replication of plasmids through activation of initiation proteins. The chain is Chaperone protein DnaJ from Streptococcus thermophilus (strain CNRZ 1066).